A 289-amino-acid chain; its full sequence is Ubiquinone biosynthesis O-methyltransferase (289 aa).

Arg-36 provides a ligand contact to S-adenosyl-L-methionine. In terms of domain architecture, RPE1 insert spans 50 to 98 (RHLSKLTYREELVGNMQHSTAAYALVREDASSRLTHKLPLEAEFEKMSN). 3 residues coordinate S-adenosyl-L-methionine: Gly-109, Asp-130, and Leu-172.

The protein belongs to the methyltransferase superfamily. UbiG/COQ3 family.

The catalysed reaction is a 3-demethylubiquinol + S-adenosyl-L-methionine = a ubiquinol + S-adenosyl-L-homocysteine + H(+). It carries out the reaction a 3-(all-trans-polyprenyl)benzene-1,2-diol + S-adenosyl-L-methionine = a 2-methoxy-6-(all-trans-polyprenyl)phenol + S-adenosyl-L-homocysteine + H(+). Its pathway is cofactor biosynthesis; ubiquinone biosynthesis. In terms of biological role, O-methyltransferase that catalyzes the 2 O-methylation steps in the ubiquinone biosynthetic pathway. The chain is Ubiquinone biosynthesis O-methyltransferase from Rickettsia conorii (strain ATCC VR-613 / Malish 7).